Reading from the N-terminus, the 209-residue chain is Large ribosomal subunit protein uL4 (209 aa).

Positions 46–71 are disordered; sequence GTSSTKTRSEVRGSSKKPWKQKGTGR. Over residues 59-71 the composition is skewed to basic residues; the sequence is SSKKPWKQKGTGR.

The protein belongs to the universal ribosomal protein uL4 family. As to quaternary structure, part of the 50S ribosomal subunit.

Its function is as follows. One of the primary rRNA binding proteins, this protein initially binds near the 5'-end of the 23S rRNA. It is important during the early stages of 50S assembly. It makes multiple contacts with different domains of the 23S rRNA in the assembled 50S subunit and ribosome. In terms of biological role, forms part of the polypeptide exit tunnel. This Borreliella afzelii (strain PKo) (Borrelia afzelii) protein is Large ribosomal subunit protein uL4.